Here is a 419-residue protein sequence, read N- to C-terminus: Peroxisomal membrane protein PMP47B (419 aa).

3 Solcar repeats span residues 6-120 (YDDL…TGKT), 142-230 (LSVW…LKSF), and 239-369 (VTPV…LLIL). A helical transmembrane segment spans residues 12 to 32 (AFAGAGGGLLSMTLTYPLVTL). Residues 44–53 (KNEEEEKENS) are compositionally biased toward basic and acidic residues. Residues 44 to 69 (KNEEEEKENSNEDGSLSPKSSNTSNI) form a disordered region. Residues 56-69 (DGSLSPKSSNTSNI) show a composition bias toward polar residues. 3 helical membrane passes run 98–118 (SALFGIAVTNFVYYYFYELTG), 204–224 (FTGIVPALFLVLNPIIQYTIF), and 245–265 (LLLGAFGKLIATIITYPYITL). The disordered stretch occupies residues 274 to 305 (MTENNEDSEKERTDSVQSLPEDGSDEDNSKEN). Transmembrane regions (helical) follow at residues 310–330 (TINKIISKLPSPIVSMFIIGY) and 349–369 (LLQSILNAAFLFYFKEELLIL).

Belongs to the mitochondrial carrier (TC 2.A.29) family.

It localises to the peroxisome membrane. In terms of biological role, may have transport activity. This is Peroxisomal membrane protein PMP47B (PMP47B) from Candida boidinii (Yeast).